The following is a 150-amino-acid chain: Large-conductance mechanosensitive channel (150 aa).

2 helical membrane passes run 14-34 (VIDL…VTSL) and 81-101 (GLFI…FIVI).

This sequence belongs to the MscL family. In terms of assembly, homopentamer.

The protein localises to the cell membrane. Its function is as follows. Channel that opens in response to stretch forces in the membrane lipid bilayer. May participate in the regulation of osmotic pressure changes within the cell. This Desulfitobacterium hafniense (strain DSM 10664 / DCB-2) protein is Large-conductance mechanosensitive channel.